Reading from the N-terminus, the 404-residue chain is Iron-sulfur assembly protein IscA2 (404 aa).

Residues 244 to 289 (KEEDEKKLDKLLKKRNIKKRDIVTITEEAKEELKKIISINKKENNN) adopt a coiled-coil conformation.

Belongs to the HesB/IscA family. As to quaternary structure, dimer. Homotetramer. Interacts with ABCB6.

Its subcellular location is the mitochondrion. The protein operates within cofactor biosynthesis; iron-sulfur cluster biosynthesis. Functionally, participates in iron-sulfur cluster formation (ISC) pathway for iron-sulfur (Fe-S) cluster biogenesis. Can bind and transfer [4Fe-4S] clusters to target apo-proteins. This chain is Iron-sulfur assembly protein IscA2, found in Plasmodium falciparum (isolate 3D7).